We begin with the raw amino-acid sequence, 571 residues long: FAD-binding monooxygenase VdtE (571 aa).

Residues 44-47, 56-57, and tyrosine 62 each bind FAD; these read VWYW and DS. 54–56 contacts NADP(+); it reads RVD. NADP(+)-binding positions include 187-193 and 210-211; these read TGASAVQ and RT.

This sequence belongs to the FAD-binding monooxygenase family. The cofactor is FAD.

It carries out the reaction 9,10-dihydroxy-7-methoxy-3-(2-oxopropyl)-1H-benzo[g]isochromen-1-one + NADPH + O2 + H(+) = methyl 2-[(3S)-9,10-dihydroxy-7-methoxy-1-oxo-1H,3H,4H-naphtho[2,3-c]pyran-3-yl]acetate + NADP(+) + H2O. It catalyses the reaction (3S)-9,10-dihydroxy-7-methoxy-3-(2-oxopropyl)-1H,3H,4H-naphtho[2,3-c]pyran-1-one + NADPH + O2 + H(+) = semiviriditoxin + NADP(+) + H2O. The protein operates within secondary metabolite biosynthesis. Its function is as follows. FAD-binding monooxygenase; part of the gene cluster that mediates the biosynthesis of viriditoxin, one of the 'classical' secondary metabolites produced by fungi and that has antibacterial activity. The first step is performed by the polyketide synthase VdtA which condenses one acetyl-CoA and 6 malonyl-CoA units to form the heptaketide monomer backbone of viriditoxin. The product of VdtA is then O-methylated on C7 by the O-methyltransferase VdtC. The O-methyl group is important for the stereoselective coupling of the monomers at the final step of viriditoxin biosynthesis. The short-chain dehydrogenase/reductase VdtF then acts as a stereospecific reductase converting the pyrone to dihydropyrone via the reduction of the C3-C4 double bond. The FAD-binding monooxygenase VdtE then converts the ketone group into a methyl-ester group to yield semi-viriditoxin. Finally, the laccase VdtB is involved in dimerization of 2 semi-viriditoxin molecules to yield the final viriditoxin. VdtB is responsible for the regioselective 6,6'-coupling of semi-viriditoxin, which yields (M)-viriditoxin and (P)-viriditoxin at a ratio of 1:2. The non-catalytic carboxylesterase-like protein VdtD affects the stereochemistical outcome of the coupling. The highly reducing polyketide synthase VdtX is not involved in viriditoxin synthesis, but might possibly play a role in the production of additional metabolites not identified yet. The sequence is that of FAD-binding monooxygenase VdtE from Byssochlamys spectabilis (Paecilomyces variotii).